Consider the following 488-residue polypeptide: UDP-N-acetylmuramoyl-L-alanyl-D-glutamate--2,6-diaminopimelate ligase (488 aa).

UDP-N-acetyl-alpha-D-muramoyl-L-alanyl-D-glutamate is bound by residues L24, S26, and 41 to 43 (HQV). ATP is bound at residue 113 to 119 (GTNGKTT). UDP-N-acetyl-alpha-D-muramoyl-L-alanyl-D-glutamate-binding positions include N154, 155-156 (TT), S182, Q188, and R190. Position 222 is an N6-carboxylysine (K222). Residues R386, 410–413 (DNPR), G461, and E465 each bind meso-2,6-diaminopimelate. The Meso-diaminopimelate recognition motif motif lies at 410 to 413 (DNPR).

It belongs to the MurCDEF family. MurE subfamily. Mg(2+) is required as a cofactor. Post-translationally, carboxylation is probably crucial for Mg(2+) binding and, consequently, for the gamma-phosphate positioning of ATP.

It localises to the cytoplasm. The catalysed reaction is UDP-N-acetyl-alpha-D-muramoyl-L-alanyl-D-glutamate + meso-2,6-diaminopimelate + ATP = UDP-N-acetyl-alpha-D-muramoyl-L-alanyl-gamma-D-glutamyl-meso-2,6-diaminopimelate + ADP + phosphate + H(+). It participates in cell wall biogenesis; peptidoglycan biosynthesis. Catalyzes the addition of meso-diaminopimelic acid to the nucleotide precursor UDP-N-acetylmuramoyl-L-alanyl-D-glutamate (UMAG) in the biosynthesis of bacterial cell-wall peptidoglycan. This Haemophilus influenzae (strain PittGG) protein is UDP-N-acetylmuramoyl-L-alanyl-D-glutamate--2,6-diaminopimelate ligase.